The following is a 238-amino-acid chain: Large ribosomal subunit protein uL5c (238 aa).

Belongs to the universal ribosomal protein uL5 family. Part of the 50S ribosomal subunit; contacts the 5S rRNA.

It is found in the plastid. It localises to the chloroplast. Binds 5S rRNA, forms part of the central protuberance of the 50S subunit. The chain is Large ribosomal subunit protein uL5c (rpl5) from Trieres chinensis (Marine centric diatom).